A 79-amino-acid polypeptide reads, in one-letter code: uncharacterized protein (79 aa).

The N-terminal stretch at 1–18 (MQIKNIVAVLATVTAINA) is a signal peptide. The segment at 24-44 (PNATTPNATQPNATQPNTTLP) is disordered. 4 N-linked (GlcNAc...) asparagine glycosylation sites follow: asparagine 25, asparagine 30, asparagine 35, and asparagine 40. The GPI-anchor amidated glycine moiety is linked to residue glycine 55. The propeptide at 56–79 (EAVVNTMAAGAFGAAIAAGVAFLF) is removed in mature form.

Its subcellular location is the cell membrane. This is an uncharacterized protein from Saccharomyces cerevisiae (strain ATCC 204508 / S288c) (Baker's yeast).